Reading from the N-terminus, the 553-residue chain is Putative transport protein YidE (553 aa).

The next 5 helical transmembrane spans lie at isoleucine 4 to valine 24, glycine 28 to serine 48, phenylalanine 65 to serine 85, leucine 95 to phenylalanine 115, and methionine 158 to leucine 178. 2 RCK C-terminal domains span residues glutamine 191–glutamine 276 and aspartate 279–asparagine 361. Helical transmembrane passes span methionine 371–valine 391, glycine 393–leucine 413, isoleucine 439–valine 459, leucine 464–leucine 484, tyrosine 493–alanine 513, and leucine 533–glycine 553.

The protein belongs to the AAE transporter (TC 2.A.81) family. YidE subfamily.

The protein resides in the cell membrane. This chain is Putative transport protein YidE, found in Shigella boydii serotype 18 (strain CDC 3083-94 / BS512).